The following is a 162-amino-acid chain: Transcription elongation factor GreA (162 aa).

The stretch at E45–E74 forms a coiled coil.

It belongs to the GreA/GreB family.

Necessary for efficient RNA polymerase transcription elongation past template-encoded arresting sites. The arresting sites in DNA have the property of trapping a certain fraction of elongating RNA polymerases that pass through, resulting in locked ternary complexes. Cleavage of the nascent transcript by cleavage factors such as GreA or GreB allows the resumption of elongation from the new 3'terminus. GreA releases sequences of 2 to 3 nucleotides. This chain is Transcription elongation factor GreA, found in Rickettsia prowazekii (strain Madrid E).